We begin with the raw amino-acid sequence, 453 residues long: Ribosomal protein uS12 methylthiotransferase RimO (453 aa).

One can recognise an MTTase N-terminal domain in the interval 5 to 120 (PKVGFVSLGC…VMQAVHSHLP (116 aa)). Positions 14, 50, 79, 151, 155, and 158 each coordinate [4Fe-4S] cluster. Residues 137–382 (LTPRHYAYLK…MEVAEEVSAQ (246 aa)) form the Radical SAM core domain. One can recognise a TRAM domain in the interval 385–453 (QRKVGKTLKV…ADGHDLWGEV (69 aa)).

Belongs to the methylthiotransferase family. RimO subfamily. Requires [4Fe-4S] cluster as cofactor.

The protein resides in the cytoplasm. It carries out the reaction L-aspartate(89)-[ribosomal protein uS12]-hydrogen + (sulfur carrier)-SH + AH2 + 2 S-adenosyl-L-methionine = 3-methylsulfanyl-L-aspartate(89)-[ribosomal protein uS12]-hydrogen + (sulfur carrier)-H + 5'-deoxyadenosine + L-methionine + A + S-adenosyl-L-homocysteine + 2 H(+). Functionally, catalyzes the methylthiolation of an aspartic acid residue of ribosomal protein uS12. This chain is Ribosomal protein uS12 methylthiotransferase RimO, found in Burkholderia ambifaria (strain ATCC BAA-244 / DSM 16087 / CCUG 44356 / LMG 19182 / AMMD) (Burkholderia cepacia (strain AMMD)).